We begin with the raw amino-acid sequence, 394 residues long: Mannosyl-3-phosphoglycerate synthase (394 aa).

It belongs to the glycosyltransferase 2 family.

It is found in the cytoplasm. The enzyme catalyses (2R)-3-phosphoglycerate + GDP-alpha-D-mannose = 2-O-(alpha-D-mannosyl)-3-phosphoglycerate + GDP + H(+). Its pathway is carbohydrate biosynthesis; 2-(alpha-D-mannosyl)-D-glycerate biosynthesis; 2-(alpha-D-mannosyl)-D-glycerate from GDP-alpha-D-mannose (MPG route): step 1/2. Transfers a mannosyl group from GDP-mannose to phosphoglycerate to form mannosyl-3-phosphoglycerate (MPG). The chain is Mannosyl-3-phosphoglycerate synthase (mngA) from Pyrococcus abyssi (strain GE5 / Orsay).